Reading from the N-terminus, the 270-residue chain is Probable thioesterase BOA10 (270 aa).

This sequence belongs to the AMT4 thioesterase family.

The protein operates within polyketide biosynthesis. In terms of biological role, probable thioesterase; part of the gene cluster B that mediates the biosynthesis of botcinic acid and its botcinin derivatives, acetate-derived polyketides that contribute to virulence when combined with the sesquiterpene botrydial. Botcinic acid and its derivatives have been shown to induce chlorosis and necrosis during host plant infection, but also have antifungal activities. Two polyketide synthases, BOA6 and BOA9, are involved in the biosynthesis of botcinins. BOA6 mediates the formation of the per-methylated tetraketide core by condensation of four units of malonyl-CoA with one unit of acetyl-CoA, which would be methylated in activated methylene groups to yield a bicyclic acid intermediate that could then either be converted to botrylactone derivatives or lose the starter acetate unit through a retro-Claisen type C-C bond cleavage to yield botcinin derivatives. The second polyketide synthase, BOA9, is probably required for the biosynthesis of the tetraketide side chain of botcinins. The methyltransferase (MT) domain within BOA6 is probably responsible for the incorporation of four methyl groups. The trans-enoyl reductase BOA5 might take over the enoyl reductase function of BOA6 that misses an ER domain. The monooxygenases BOA2, BOA3 and BOA4 might be involved in further hydroxylations at C4, C5 and C8, whereas BOA7, close to BOA9, could potentially be involved in the hydroxylation at C4 in the side chain of botcinins. This is Probable thioesterase BOA10 from Botryotinia fuckeliana (strain B05.10) (Noble rot fungus).